A 300-amino-acid chain; its full sequence is 4-hydroxy-tetrahydrodipicolinate synthase (300 aa).

Residue Thr54 participates in pyruvate binding. Tyr142 serves as the catalytic Proton donor/acceptor. The active-site Schiff-base intermediate with substrate is Lys170. A pyruvate-binding site is contributed by Ile212.

Belongs to the DapA family. As to quaternary structure, homotetramer; dimer of dimers.

It localises to the cytoplasm. It carries out the reaction L-aspartate 4-semialdehyde + pyruvate = (2S,4S)-4-hydroxy-2,3,4,5-tetrahydrodipicolinate + H2O + H(+). It functions in the pathway amino-acid biosynthesis; L-lysine biosynthesis via DAP pathway; (S)-tetrahydrodipicolinate from L-aspartate: step 3/4. Catalyzes the condensation of (S)-aspartate-beta-semialdehyde [(S)-ASA] and pyruvate to 4-hydroxy-tetrahydrodipicolinate (HTPA). This Halorhodospira halophila (strain DSM 244 / SL1) (Ectothiorhodospira halophila (strain DSM 244 / SL1)) protein is 4-hydroxy-tetrahydrodipicolinate synthase.